We begin with the raw amino-acid sequence, 124 residues long: Small ribosomal subunit protein uS13 (124 aa).

The tract at residues 97–124 (PVRGQRTKTNARTRKGPKRTIAGKKKAR) is disordered.

It belongs to the universal ribosomal protein uS13 family. Part of the 30S ribosomal subunit. Forms a loose heterodimer with protein S19. Forms two bridges to the 50S subunit in the 70S ribosome.

Functionally, located at the top of the head of the 30S subunit, it contacts several helices of the 16S rRNA. In the 70S ribosome it contacts the 23S rRNA (bridge B1a) and protein L5 of the 50S subunit (bridge B1b), connecting the 2 subunits; these bridges are implicated in subunit movement. Contacts the tRNAs in the A and P-sites. The polypeptide is Small ribosomal subunit protein uS13 (Mycolicibacterium gilvum (strain PYR-GCK) (Mycobacterium gilvum (strain PYR-GCK))).